Reading from the N-terminus, the 342-residue chain is L-threonine 3-dehydrogenase (342 aa).

C38 contacts Zn(2+). Catalysis depends on charge relay system residues T40 and H43. H63, E64, C93, C96, C99, and C107 together coordinate Zn(2+). NAD(+)-binding positions include I175, D195, R200, 262 to 264, and 286 to 287; these read LGI and IY.

It belongs to the zinc-containing alcohol dehydrogenase family. In terms of assembly, homotetramer. It depends on Zn(2+) as a cofactor.

It localises to the cytoplasm. It catalyses the reaction L-threonine + NAD(+) = (2S)-2-amino-3-oxobutanoate + NADH + H(+). It functions in the pathway amino-acid degradation; L-threonine degradation via oxydo-reductase pathway; glycine from L-threonine: step 1/2. Functionally, catalyzes the NAD(+)-dependent oxidation of L-threonine to 2-amino-3-ketobutyrate. This chain is L-threonine 3-dehydrogenase, found in Burkholderia vietnamiensis (strain G4 / LMG 22486) (Burkholderia cepacia (strain R1808)).